Consider the following 637-residue polypeptide: Serine/threonine-protein kinase Nek11 (637 aa).

One can recognise a Protein kinase domain in the interval tyrosine 29–isoleucine 287. ATP is bound by residues leucine 35–valine 43 and lysine 61. The Proton acceptor role is filled by aspartate 158. Serine 273 is subject to Phosphoserine; by CHEK1. The stretch at threonine 302 to glutamine 385 forms a coiled coil. The interval glycine 399 to serine 446 is disordered. The segment covering glutamine 416 to threonine 434 has biased composition (acidic residues).

The protein belongs to the protein kinase superfamily. NEK Ser/Thr protein kinase family. NIMA subfamily. In terms of assembly, interacts with NEK2. It depends on Mn(2+) as a cofactor. The cofactor is Mg(2+). Post-translationally, phosphorylated by NEK2. Phosphorylation at Ser-273 is important for its activation.

Its subcellular location is the nucleus. It is found in the nucleolus. It carries out the reaction L-seryl-[protein] + ATP = O-phospho-L-seryl-[protein] + ADP + H(+). The enzyme catalyses L-threonyl-[protein] + ATP = O-phospho-L-threonyl-[protein] + ADP + H(+). Its activity is regulated as follows. Autorepressed by intramolecular binding of the C-terminus which dissociates following phosphorylation by NEK2. Activated in response to DNA damage. Inhibited by zinc. Functionally, protein kinase which plays an important role in the G2/M checkpoint response to DNA damage. Controls degradation of CDC25A by directly phosphorylating it on residues whose phosphorylation is required for BTRC-mediated polyubiquitination and degradation. The chain is Serine/threonine-protein kinase Nek11 (NEK11) from Macaca fascicularis (Crab-eating macaque).